A 146-amino-acid polypeptide reads, in one-letter code: 1,4-dihydroxy-2-naphthoyl-CoA hydrolase (146 aa).

Residue Asp-15 is part of the active site.

Belongs to the 4-hydroxybenzoyl-CoA thioesterase family. DHNA-CoA hydrolase subfamily.

It catalyses the reaction 1,4-dihydroxy-2-naphthoyl-CoA + H2O = 1,4-dihydroxy-2-naphthoate + CoA + H(+). It functions in the pathway cofactor biosynthesis; phylloquinone biosynthesis. It participates in quinol/quinone metabolism; 1,4-dihydroxy-2-naphthoate biosynthesis; 1,4-dihydroxy-2-naphthoate from chorismate: step 7/7. Catalyzes the hydrolysis of 1,4-dihydroxy-2-naphthoyl-CoA (DHNA-CoA) to 1,4-dihydroxy-2-naphthoate (DHNA), a reaction involved in phylloquinone (vitamin K1) biosynthesis. This is 1,4-dihydroxy-2-naphthoyl-CoA hydrolase from Picosynechococcus sp. (strain ATCC 27264 / PCC 7002 / PR-6) (Agmenellum quadruplicatum).